The sequence spans 191 residues: Cell division protein SepF (191 aa).

The segment covering 156 to 167 (EEASPSNMSNKG) has biased composition (polar residues). A disordered region spans residues 156 to 191 (EEASPSNMSNKGNDLISKETSPAPEPAWGETVATAL).

It belongs to the SepF family. As to quaternary structure, homodimer. Interacts with FtsZ.

The protein localises to the cytoplasm. Its function is as follows. Cell division protein that is part of the divisome complex and is recruited early to the Z-ring. Probably stimulates Z-ring formation, perhaps through the cross-linking of FtsZ protofilaments. Its function overlaps with FtsA. The protein is Cell division protein SepF of Prochlorococcus marinus (strain NATL2A).